Consider the following 414-residue polypeptide: 2,3-bisphosphoglycerate-independent phosphoglycerate mutase (414 aa).

Belongs to the BPG-independent phosphoglycerate mutase family. A-PGAM subfamily.

It catalyses the reaction (2R)-2-phosphoglycerate = (2R)-3-phosphoglycerate. Its pathway is carbohydrate degradation; glycolysis; pyruvate from D-glyceraldehyde 3-phosphate: step 3/5. Functionally, catalyzes the interconversion of 2-phosphoglycerate and 3-phosphoglycerate. This is 2,3-bisphosphoglycerate-independent phosphoglycerate mutase from Saccharolobus solfataricus (strain ATCC 35092 / DSM 1617 / JCM 11322 / P2) (Sulfolobus solfataricus).